Reading from the N-terminus, the 461-residue chain is Mannose-6-phosphate isomerase (461 aa).

Zn(2+) is bound by residues glutamine 107, histidine 109, glutamate 134, and histidine 291. Arginine 310 is an active-site residue.

The protein belongs to the mannose-6-phosphate isomerase type 1 family. The cofactor is Zn(2+).

It localises to the cytoplasm. The enzyme catalyses D-mannose 6-phosphate = D-fructose 6-phosphate. It functions in the pathway nucleotide-sugar biosynthesis; GDP-alpha-D-mannose biosynthesis; alpha-D-mannose 1-phosphate from D-fructose 6-phosphate: step 1/2. In terms of biological role, involved in the synthesis of the GDP-mannose and dolichol-phosphate-mannose required for a number of critical mannosyl transfer reactions. The polypeptide is Mannose-6-phosphate isomerase (manA) (Emericella nidulans (strain FGSC A4 / ATCC 38163 / CBS 112.46 / NRRL 194 / M139) (Aspergillus nidulans)).